The chain runs to 344 residues: uncharacterized protein (344 aa).

Belongs to the glycosyltransferase 2 family.

In terms of biological role, may be involved in the production of the exopolysaccharide (EPS) component of the extracellular matrix during biofilm formation. EPS is responsible for the adhesion of chains of cells into bundles. This is an uncharacterized protein from Bacillus subtilis (strain 168).